An 85-amino-acid chain; its full sequence is U4-theraphotoxin-Hhn1a (85 aa).

An N-terminal signal peptide occupies residues M1–A22. A propeptide spanning residues E23 to R48 is cleaved from the precursor. Disulfide bonds link C52/C66, C56/C77, and C71/C82.

This sequence belongs to the neurotoxin 12 (Hwtx-2) family. 02 (Hwtx-2) subfamily. In terms of assembly, monomer. In terms of tissue distribution, expressed by the venom gland.

Its subcellular location is the secreted. Its function is as follows. Neurotoxin active on both insects and mammals. This is U4-theraphotoxin-Hhn1a from Cyriopagopus hainanus (Chinese bird spider).